Reading from the N-terminus, the 292-residue chain is NAD kinase (292 aa).

Asp73 (proton acceptor) is an active-site residue. NAD(+) contacts are provided by residues 73–74 (DG), 147–148 (NE), His158, Arg175, Asp177, 188–193 (TAYSLS), and Gln247.

It belongs to the NAD kinase family. Requires a divalent metal cation as cofactor.

It localises to the cytoplasm. The catalysed reaction is NAD(+) + ATP = ADP + NADP(+) + H(+). Its function is as follows. Involved in the regulation of the intracellular balance of NAD and NADP, and is a key enzyme in the biosynthesis of NADP. Catalyzes specifically the phosphorylation on 2'-hydroxyl of the adenosine moiety of NAD to yield NADP. The sequence is that of NAD kinase from Pectobacterium atrosepticum (strain SCRI 1043 / ATCC BAA-672) (Erwinia carotovora subsp. atroseptica).